Reading from the N-terminus, the 1238-residue chain is Cullin-associated NEDD8-dissociated protein 1 (1238 aa).

HEAT repeat units follow at residues 41–78 (TYEN…RVKD), 126–167 (LVIK…KYGS), 171–208 (GDLE…PSPD), 210–247 (LFNS…SSGY), and 251–292 (KYLP…KCQK). Positions 315–354 (YSDDGEGEEDGDEEEEEMETSGDNDEEQEEEEEEEDLSDD) are disordered. HEAT repeat units lie at residues 382–419 (ELYQ…QLNK), 432–469 (QQVP…IIPG), 603–641 (EIQS…SSIN), 646–683 (SILP…VCPN), 688–725 (SLLT…NYSE), 853–890 (HENE…CSLQ), 933–966 (PFLQ…KLSM), 967–1004 (IEPN…ENKE), and 1008–1045 (QYLA…NKPN).

This sequence belongs to the CAND family.

Its subcellular location is the nucleus. Functionally, key assembly factor of SCF (SKP1-CUL1-F-box protein) E3 ubiquitin ligase complexes that promotes the exchange of the substrate-recognition F-box subunit in SCF complexes, thereby playing a key role in the cellular repertoire of SCF complexes. Acts as a F-box protein exchange factor. The chain is Cullin-associated NEDD8-dissociated protein 1 (cand1) from Dictyostelium discoideum (Social amoeba).